We begin with the raw amino-acid sequence, 319 residues long: Heavy metal-associated isoprenylated plant protein 9 (319 aa).

Composition is skewed to basic and acidic residues over residues Met-1–Glu-11 and Glu-24–Glu-45. The disordered stretch occupies residues Met-1–Pro-57. A coiled-coil region spans residues Ala-21–Glu-48. HMA domains follow at residues Pro-55–Ala-118 and Leu-144–Arg-208. Residues Cys-66, Cys-69, Cys-155, and Cys-158 each contribute to the a metal cation site. Positions Ala-207–Gln-282 are disordered. A compositionally biased stretch (basic and acidic residues) spans Gln-224–Glu-254. Acidic residues predominate over residues Glu-255 to Thr-268. Cys-316 bears the Cysteine methyl ester mark. Cys-316 is lipidated: S-farnesyl cysteine. Residues Cys-317 to Ser-319 constitute a propeptide, removed in mature form.

This sequence belongs to the HIPP family.

Heavy-metal-binding protein. The chain is Heavy metal-associated isoprenylated plant protein 9 from Arabidopsis thaliana (Mouse-ear cress).